We begin with the raw amino-acid sequence, 177 residues long: R-phycoerythrin beta chain (177 aa).

(2R,3E)-phycoerythrobilin contacts are provided by N35 and D39. The phycourobilin site is built by C50, D54, and C61. (2R,3E)-phycoerythrobilin contacts are provided by residues N72, 77 to 78 (RR), C82, and 84 to 85 (RD). Residue N72 is modified to N4-methylasparagine. A phycourobilin-binding site is contributed by 147–148 (SQ). (2R,3E)-phycoerythrobilin contacts are provided by I154 and C158.

The protein belongs to the phycobiliprotein family. In terms of assembly, heterododecamer of 6 alpha and 6 beta chains. The basic functional unit of phycobiliproteins is a ring-shaped hexamer formed from two back-to-back trimers contacting via the alpha chain subunits. The trimers are composed of alpha/beta subunit heterodimers arranged around a three-fold axis of symmetry. The phycoerythrins also contain a gamma subunit which is located in the center of the hexamer. Contains two covalently linked phycoerythrobilin chromophores and one covalently linked phycourobilin chromophore.

It localises to the plastid. Its subcellular location is the chloroplast thylakoid membrane. Functionally, light-harvesting photosynthetic tetrapyrrole chromophore-protein from the phycobiliprotein complex. The chain is R-phycoerythrin beta chain (rpeB) from Agarophyton chilense (Red seaweed).